A 175-amino-acid polypeptide reads, in one-letter code: NADH-ubiquinone oxidoreductase chain 6 (175 aa).

The next 5 helical transmembrane spans lie at 1 to 21 (MMMY…VGVS), 25 to 45 (SPIY…GVIL), 47 to 67 (FGGS…MLVV), 88 to 108 (VVLG…IYAL), and 149 to 169 (YGVW…VIIM).

This sequence belongs to the complex I subunit 6 family. Core subunit of respiratory chain NADH dehydrogenase (Complex I) which is composed of 45 different subunits.

It localises to the mitochondrion inner membrane. The catalysed reaction is a ubiquinone + NADH + 5 H(+)(in) = a ubiquinol + NAD(+) + 4 H(+)(out). Functionally, core subunit of the mitochondrial membrane respiratory chain NADH dehydrogenase (Complex I) which catalyzes electron transfer from NADH through the respiratory chain, using ubiquinone as an electron acceptor. Essential for the catalytic activity and assembly of complex I. The polypeptide is NADH-ubiquinone oxidoreductase chain 6 (MT-ND6) (Balaenoptera physalus (Fin whale)).